The following is a 225-amino-acid chain: Tryptophan synthase beta chain (225 aa).

The protein belongs to the TrpB family. In terms of assembly, tetramer of two alpha and two beta chains. It depends on pyridoxal 5'-phosphate as a cofactor.

It catalyses the reaction (1S,2R)-1-C-(indol-3-yl)glycerol 3-phosphate + L-serine = D-glyceraldehyde 3-phosphate + L-tryptophan + H2O. It participates in amino-acid biosynthesis; L-tryptophan biosynthesis; L-tryptophan from chorismate: step 5/5. In terms of biological role, the beta subunit is responsible for the synthesis of L-tryptophan from indole and L-serine. The chain is Tryptophan synthase beta chain (trpB) from Buchnera aphidicola subsp. Rhopalosiphum maidis.